The primary structure comprises 316 residues: Apolipoprotein E (316 aa).

Positions 1-18 are cleaved as a signal peptide; the sequence is MKVLWAALVVTLLAGCGA. A run of 8 repeats spans residues 83-104, 105-126, 127-148, 149-170, 171-192, 193-214, 215-232, and 233-254. The interval 83–254 is 8 X 22 AA approximate tandem repeats; it reads ALMDDTMKEV…RLDEVREQVQ (172 aa). The tract at residues 161–171 is LDL and other lipoprotein receptors binding; it reads HLRKLRKRLLR. 165-168 is a binding site for heparin; that stretch reads LRKR. The lipid-binding and lipoprotein association stretch occupies residues 213–289; sequence HTLVSKPLQE…SWFEPLVQDM (77 aa). 228 to 235 is a heparin binding site; sequence AQRLRGRL. The tract at residues 265–316 is homooligomerization; sequence NQVRLQAEAFQGRLKSWFEPLVQDMQQKWAELVEKVQLAVGAVPTSVPSEKQ. Residues 277 to 289 form a specificity for association with VLDL region; it reads RLKSWFEPLVQDM.

It belongs to the apolipoprotein A1/A4/E family. As to quaternary structure, homotetramer. May interact with ABCA1; functionally associated with ABCA1 in the biogenesis of HDLs. May interact with APP/A4 amyloid-beta peptide; the interaction is extremely stable in vitro but its physiological significance is unclear. May interact with MAPT. May interact with MAP2. In the cerebrospinal fluid, interacts with secreted SORL1. Interacts with PMEL; this allows the loading of PMEL luminal fragment on ILVs to induce fibril nucleation. Post-translationally, APOE exists as multiple glycosylated and sialylated glycoforms within cells and in plasma. The extent of glycosylation and sialylation are tissue and context specific. In terms of processing, glycated in plasma VLDL. Phosphorylated by FAM20C in the extracellular medium.

It localises to the secreted. The protein resides in the extracellular space. It is found in the extracellular matrix. Its subcellular location is the extracellular vesicle. The protein localises to the endosome. It localises to the multivesicular body. APOE is an apolipoprotein, a protein associating with lipid particles, that mainly functions in lipoprotein-mediated lipid transport between organs via the plasma and interstitial fluids. APOE is a core component of plasma lipoproteins and is involved in their production, conversion and clearance. Apolipoproteins are amphipathic molecules that interact both with lipids of the lipoprotein particle core and the aqueous environment of the plasma. As such, APOE associates with chylomicrons, chylomicron remnants, very low density lipoproteins (VLDL) and intermediate density lipoproteins (IDL) but shows a preferential binding to high-density lipoproteins (HDL). It also binds a wide range of cellular receptors including the LDL receptor/LDLR and the very low-density lipoprotein receptor/VLDLR that mediate the cellular uptake of the APOE-containing lipoprotein particles. Finally, APOE also has a heparin-binding activity and binds heparan-sulfate proteoglycans on the surface of cells, a property that supports the capture and the receptor-mediated uptake of APOE-containing lipoproteins by cells. This Diceros bicornis (Black rhinoceros) protein is Apolipoprotein E (APOE).